A 60-amino-acid chain; its full sequence is Temporin-CG1 (60 aa).

The N-terminal stretch at 1-22 (MFTLKKSLLLLFFLATINLSLC) is a signal peptide. Residues 23-43 (EQERNAEEERRDDDERNAEVE) constitute a propeptide, removed in mature form.

As to expression, expressed by the skin glands.

Its subcellular location is the secreted. In terms of biological role, antimicrobial peptide active against a variety of Gram-positive and some Gram-negative bacterial strains. Has antifungal activity against a slime mold isolate. Has weak hemolytic activity against human erythrocytes. The protein is Temporin-CG1 of Amolops chunganensis (Chungan torrent frog).